We begin with the raw amino-acid sequence, 22 residues long: Caerin-3.4 (22 aa).

Lys-22 carries the post-translational modification Lysine amide.

In terms of tissue distribution, expressed by the skin parotoid and/or rostral glands.

It localises to the secreted. Functionally, antibacterial peptide, that adopts an alpha helical conformation which can disrupt bacterial membranes. Each caerin displays a different antimicrobial specificity. The sequence is that of Caerin-3.4 from Ranoidea caerulea (Green tree frog).